We begin with the raw amino-acid sequence, 142 residues long: MYSGRTSYDENTRQLYKLDDNGNFVFVENISLDNYFDLLIDIYRTNDPIDELDCCFKLHDMDTNTNNISDIIKASHSLPVNMGHIDPVFYLGYPVIFIIGVTYFSIIASRKINPSDRLLNEIKEYRLTCQNVYRKKFSINFV.

2 N-linked (GlcNAc...) asparagine; by host glycosylation sites follow: asparagine 29 and asparagine 67. Residues 88–108 (VFYLGYPVIFIIGVTYFSIIA) traverse the membrane as a helical segment.

The protein resides in the membrane. This is an uncharacterized protein from Acanthamoeba polyphaga mimivirus (APMV).